Consider the following 590-residue polypeptide: MDTIEPIKICKKMYYSADELKEKCPIFFKGYRNSWSLINADVVDEQCYIFAKYEDGKWIKSTSQSKKFNKVFLLDYWVESNIPEFNSNLEYEITQAPDILKLKNSEKFKDDKGNIIDIEVRGNKNDSECYFLVKDVASGFYIKRLFSILLNFNSGYEIKTHYVYFNIIKQKNDKTIVKKELFLTHLGFVRLIHRSRINNVKYKKTVHRWLSQFKSKTPEKFVLNIEKMSKESRIGFTYLVSSPLLNAVKIGAWRSTLISLRSRYITGYGEDLSLFAIKTADAFALEKKCHKHFTKHKLTNELYDKQHYNEYVIFPKKNKEDYDIELESDIDKSESDIDDSESDIDSENDIDSESDIDDSETDDEEELENPIKTLSSFQYCKNEATDIFGNIKIISDTVDFYLCVSDVEKLIGNKNNYNQDSLIFVKKNYGKELYIKYVGLLEFVFTTNSTKESIVKLRKWMCNTLNTVQMGTKSQKNQLIASMTGVSPEAIKAVFSKTSSTLPCIYFFTIGKVKDLRKSLKISKDYDDEDIIGKYGMTKDLDRRTGEHNDTYGQLPGSDFRLTVFNFIDVQYMSQAETDLKLYMKDTILI.

Positions isoleucine 330 to glutamate 368 are disordered. Residues aspartate 336–glutamate 368 show a composition bias toward acidic residues.

This sequence belongs to the mimivirus L5 family.

This is an uncharacterized protein from Acanthamoeba polyphaga mimivirus (APMV).